A 115-amino-acid polypeptide reads, in one-letter code: MNVMLALLTNTLLSTLLVLIAFWLPQLNIYAEKASPYECGFDPMGSARLPFSMKFFLVAITFLLFDLEIALLLPLPWASQTDKLPTMLTMALLLISLLAASLAYEWTQKGLEWTE.

The next 3 membrane-spanning stretches (helical) occupy residues 3–23 (VMLALLTNTLLSTLLVLIAFW), 55–75 (FFLVAITFLLFDLEIALLLPL), and 84–104 (LPTMLTMALLLISLLAASLAY).

The protein belongs to the complex I subunit 3 family. Core subunit of respiratory chain NADH dehydrogenase (Complex I) which is composed of 45 different subunits. Interacts with TMEM186. Interacts with TMEM242.

The protein localises to the mitochondrion inner membrane. It catalyses the reaction a ubiquinone + NADH + 5 H(+)(in) = a ubiquinol + NAD(+) + 4 H(+)(out). Functionally, core subunit of the mitochondrial membrane respiratory chain NADH dehydrogenase (Complex I) which catalyzes electron transfer from NADH through the respiratory chain, using ubiquinone as an electron acceptor. Essential for the catalytic activity of complex I. The protein is NADH-ubiquinone oxidoreductase chain 3 of Felis catus (Cat).